The following is a 169-amino-acid chain: Disulfide bond formation protein B (169 aa).

At 1-14 (MMRFLNHCSQGRSA) the chain is on the cytoplasmic side. A helical transmembrane segment spans residues 15–31 (WLLMILTALILESSALY). The Periplasmic portion of the chain corresponds to 32–49 (FQHVMKLQPCVMCIYERV). A disulfide bond links C41 and C44. The helical transmembrane segment at 50–65 (ALFGVLSAGILGVIAP) threads the bilayer. Topologically, residues 66-71 (KTPLRW) are cytoplasmic. A helical transmembrane segment spans residues 72–89 (LAIILWIYSAWGGLQLAW). Residues 90 to 144 (QHTMMQLHPSPFNTCDFFVNFPSWLALNQWLPSVFEATGDCSVRQWQFLTLEMPQ) are Periplasmic-facing. An intrachain disulfide couples C104 to C130. A helical membrane pass occupies residues 145-163 (WLVGIFAAYLVVAALVLIS). The Cytoplasmic portion of the chain corresponds to 164–169 (QFFSRK).

It belongs to the DsbB family.

The protein resides in the cell inner membrane. In terms of biological role, required for disulfide bond formation in some periplasmic proteins. Acts by oxidizing the DsbA protein. The sequence is that of Disulfide bond formation protein B from Photorhabdus laumondii subsp. laumondii (strain DSM 15139 / CIP 105565 / TT01) (Photorhabdus luminescens subsp. laumondii).